We begin with the raw amino-acid sequence, 304 residues long: Ribosomal RNA small subunit methyltransferase H (304 aa).

S-adenosyl-L-methionine is bound by residues 37 to 39, Asp57, Phe79, Asp100, and His107; that span reads GGH.

Belongs to the methyltransferase superfamily. RsmH family.

It localises to the cytoplasm. The enzyme catalyses cytidine(1402) in 16S rRNA + S-adenosyl-L-methionine = N(4)-methylcytidine(1402) in 16S rRNA + S-adenosyl-L-homocysteine + H(+). In terms of biological role, specifically methylates the N4 position of cytidine in position 1402 (C1402) of 16S rRNA. The protein is Ribosomal RNA small subunit methyltransferase H of Bacteroides fragilis (strain YCH46).